Reading from the N-terminus, the 290-residue chain is Urease accessory protein UreD (290 aa).

This sequence belongs to the UreD family. In terms of assembly, ureD, UreF and UreG form a complex that acts as a GTP-hydrolysis-dependent molecular chaperone, activating the urease apoprotein by helping to assemble the nickel containing metallocenter of UreC. The UreE protein probably delivers the nickel.

The protein resides in the cytoplasm. Required for maturation of urease via the functional incorporation of the urease nickel metallocenter. The protein is Urease accessory protein UreD of Paenarthrobacter aurescens (strain TC1).